Reading from the N-terminus, the 340-residue chain is NADPH dehydrogenase (340 aa).

Residue 23-26 (SPMC) coordinates FMN. Position 28 (tyrosine 28) interacts with substrate. FMN-binding residues include alanine 60 and glutamine 102. 164–167 (HGAH) serves as a coordination point for substrate. Residues arginine 215 and 307–308 (AR) contribute to the FMN site.

It belongs to the NADH:flavin oxidoreductase/NADH oxidase family. NamA subfamily. Homotetramer. FMN serves as cofactor.

The enzyme catalyses A + NADPH + H(+) = AH2 + NADP(+). Functionally, catalyzes the reduction of the double bond of an array of alpha,beta-unsaturated aldehydes and ketones. It also reduces the nitro group of nitroester and nitroaromatic compounds. It could have a role in detoxification processes. The polypeptide is NADPH dehydrogenase (Geobacillus sp. (strain WCH70)).